Reading from the N-terminus, the 305-residue chain is N-acetylneuraminate lyase (305 aa).

Aceneuramate-binding residues include Thr51 and Thr52. Catalysis depends on Tyr143, which acts as the Proton donor. Lys173 functions as the Schiff-base intermediate with substrate in the catalytic mechanism. Residues Thr175, Gly197, Asp199, Glu200, and Ser216 each coordinate aceneuramate.

Belongs to the DapA family. NanA subfamily. Homotetramer.

It localises to the cytoplasm. It catalyses the reaction aceneuramate = aldehydo-N-acetyl-D-mannosamine + pyruvate. The protein operates within amino-sugar metabolism; N-acetylneuraminate degradation. In terms of biological role, catalyzes the cleavage of N-acetylneuraminic acid (sialic acid) to form pyruvate and N-acetylmannosamine via a Schiff base intermediate. It prevents sialic acids from being recycled and returning to the cell surface. Involved in the N-glycolylneuraminic acid (Neu5Gc) degradation pathway. The chain is N-acetylneuraminate lyase from Xenopus tropicalis (Western clawed frog).